A 446-amino-acid polypeptide reads, in one-letter code: Glutamyl-tRNA reductase (446 aa).

Residues 49–52 (TCNR), Ser-109, 114–116 (ETQ), and Gln-120 each bind substrate. The Nucleophile role is filled by Cys-50. Position 189 to 194 (189 to 194 (GAGKMG)) interacts with NADP(+).

Belongs to the glutamyl-tRNA reductase family. In terms of assembly, homodimer.

The catalysed reaction is (S)-4-amino-5-oxopentanoate + tRNA(Glu) + NADP(+) = L-glutamyl-tRNA(Glu) + NADPH + H(+). The protein operates within porphyrin-containing compound metabolism; protoporphyrin-IX biosynthesis; 5-aminolevulinate from L-glutamyl-tRNA(Glu): step 1/2. Catalyzes the NADPH-dependent reduction of glutamyl-tRNA(Glu) to glutamate 1-semialdehyde (GSA). The polypeptide is Glutamyl-tRNA reductase (Priestia megaterium (Bacillus megaterium)).